Here is a 230-residue protein sequence, read N- to C-terminus: MGEEGFLAHFAFSIGGLPITQSVLTTWFIMISLFIMAWSTTYKCSLLQPSTYQLIWEGVLSTMYDAIKEVLPEHVELIFPFVATLWIFILVSNLIGVIPGFYSPTADLSVTASLAIMTFLSVHWFGIRAEGWREYLKHYIKPTPFLLPFHLISEISRTLALAVRLFGNIMSLQLTALIVLMIAGFLVPIPILILHIIEAIIQAYIFGMLALIYIAGGIQAHELKSQGESL.

The next 5 membrane-spanning stretches (helical) occupy residues 17–37 (LPITQSVLTTWFIMISLFIMA), 78–98 (IFPFVATLWIFILVSNLIGVI), 107–127 (DLSVTASLAIMTFLSVHWFGI), 165–187 (LFGNIMSLQLTALIVLMIAGFLV), and 198–218 (EAIIQAYIFGMLALIYIAGGI).

The protein belongs to the ATPase A chain family. F-type ATPases have 2 components, CF(1) - the catalytic core - and CF(0) - the membrane proton channel. CF(1) has five subunits: alpha(3), beta(3), gamma(1), delta(1), epsilon(1). CF(0) has three main subunits: a(1), b(2) and c(9-12). The alpha and beta chains form an alternating ring which encloses part of the gamma chain. CF(1) is attached to CF(0) by a central stalk formed by the gamma and epsilon chains, while a peripheral stalk is formed by the delta and b chains.

It localises to the cell inner membrane. Functionally, key component of the proton channel; it plays a direct role in the translocation of protons across the membrane. In Legionella pneumophila subsp. pneumophila (strain Philadelphia 1 / ATCC 33152 / DSM 7513), this protein is ATP synthase subunit a.